Here is a 638-residue protein sequence, read N- to C-terminus: Cytoplasmic dynein 1 intermediate chain 2 (638 aa).

Composition is skewed to basic and acidic residues over residues Met-1–Arg-13 and Gln-20–Ala-43. 2 disordered regions span residues Met-1–Pro-135 and Thr-155–Gln-214. Ser-2 is subject to N-acetylserine. The residue at position 51 (Ser-51) is a Diphosphoserine. A phosphoserine mark is found at Ser-51, Ser-73, Trp-81, Pro-84, and Ser-90. The segment covering Pro-88–Ser-97 has biased composition (low complexity). Phosphothreonine is present on Thr-95. Phosphoserine occurs at positions 97, 101, and 104. Positions Glu-190–Gln-214 are enriched in basic and acidic residues. WD repeat units lie at residues Ser-277–Glu-326, His-330–Val-370, Ala-379–Asp-420, Ser-429–Ser-469, Gly-474–Ser-519, Asp-522–Thr-562, and Glu-568–Arg-607.

Belongs to the dynein intermediate chain family. As to quaternary structure, homodimer. The cytoplasmic dynein 1 complex consists of two catalytic heavy chains (HCs) and a number of non-catalytic subunits presented by intermediate chains (ICs), light intermediate chains (LICs) and light chains (LCs); the composition seems to vary in respect to the IC, LIC and LC composition. The heavy chain homodimer serves as a scaffold for the probable homodimeric assembly of the respective non-catalytic subunits. The ICs and LICs bind directly to the HC dimer and the LCs assemble on the IC dimer. Interacts with DYNLT3. Interacts with DYNLT1. Interacts (dephosphorylated at Ser-90) with DCTN1. Interacts with BICD2. Interacts with SPEF2. Interacts with CFAP61. In terms of assembly, (Microbial infection) Interacts with human adenovirus 5 hexon protein; this interaction probably allows virus intracellular transport. In terms of processing, the phosphorylation status of Ser-90 appears to be involved in dynactin-dependent target binding. Post-translationally, pyrophosphorylation by 5-diphosphoinositol pentakisphosphate (5-IP7) promotes interaction with DCTN1. Serine pyrophosphorylation is achieved by Mg(2+)-dependent, but enzyme independent transfer of a beta-phosphate from a inositol pyrophosphate to a pre-phosphorylated serine residue.

It localises to the cytoplasm. Its subcellular location is the cytoskeleton. Functionally, acts as one of several non-catalytic accessory components of the cytoplasmic dynein 1 complex that are thought to be involved in linking dynein to cargos and to adapter proteins that regulate dynein function. Cytoplasmic dynein 1 acts as a motor for the intracellular retrograde motility of vesicles and organelles along microtubules. The intermediate chains mediate the binding of dynein to dynactin via its 150 kDa component (p150-glued) DCTN1. Involved in membrane-transport, such as Golgi apparatus, late endosomes and lysosomes. The chain is Cytoplasmic dynein 1 intermediate chain 2 from Homo sapiens (Human).